The sequence spans 621 residues: Chaperone protein HtpG (621 aa).

Residues 1–328 (MKQEKKKFDA…SEDLPLNISR (328 aa)) are a; substrate-binding. Positions 329–544 (ESLQHNNVLE…EAAMDIRMER (216 aa)) are b. The segment at 479–498 (VDQATSSSEEKNKDDKKSDD) is disordered. Residues 486–498 (SEEKNKDDKKSDD) show a composition bias toward basic and acidic residues. The interval 545 to 621 (FLIEQKQIAN…LNDIVQKAIL (77 aa)) is c.

The protein belongs to the heat shock protein 90 family. Homodimer.

The protein resides in the cytoplasm. Molecular chaperone. Has ATPase activity. The protein is Chaperone protein HtpG of Rickettsia bellii (strain OSU 85-389).